A 526-amino-acid polypeptide reads, in one-letter code: Maturase K (526 aa).

Belongs to the intron maturase 2 family. MatK subfamily.

It localises to the plastid. The protein localises to the chloroplast. In terms of biological role, usually encoded in the trnK tRNA gene intron. Probably assists in splicing its own and other chloroplast group II introns. In Iris setosa (Hiougi-ayame), this protein is Maturase K.